Reading from the N-terminus, the 766-residue chain is LPS-assembly protein LptD (766 aa).

A signal peptide spans 1–18 (MQIRYFLALSLLPNIVLA).

It belongs to the LptD family. Component of the lipopolysaccharide transport and assembly complex. Interacts with LptE and LptA.

It localises to the cell outer membrane. Its function is as follows. Together with LptE, is involved in the assembly of lipopolysaccharide (LPS) at the surface of the outer membrane. The sequence is that of LPS-assembly protein LptD from Shewanella frigidimarina (strain NCIMB 400).